The chain runs to 247 residues: Geranylgeranylglyceryl phosphate synthase (247 aa).

Mg(2+) is bound by residues aspartate 24 and serine 53. Sn-glycerol 1-phosphate contacts are provided by residues 172-178, 203-204, and 225-226; these read YLEAGSG, GG, and GT.

Belongs to the GGGP/HepGP synthase family. Group II subfamily. The cofactor is Mg(2+).

It localises to the cytoplasm. It catalyses the reaction sn-glycerol 1-phosphate + (2E,6E,10E)-geranylgeranyl diphosphate = sn-3-O-(geranylgeranyl)glycerol 1-phosphate + diphosphate. It participates in membrane lipid metabolism; glycerophospholipid metabolism. Its function is as follows. Prenyltransferase that catalyzes the transfer of the geranylgeranyl moiety of geranylgeranyl diphosphate (GGPP) to the C3 hydroxyl of sn-glycerol-1-phosphate (G1P). This reaction is the first ether-bond-formation step in the biosynthesis of archaeal membrane lipids. The chain is Geranylgeranylglyceryl phosphate synthase from Cenarchaeum symbiosum (strain A).